Consider the following 132-residue polypeptide: Phosphoribosyl-AMP cyclohydrolase (132 aa).

Mg(2+) is bound at residue Asp-86. Cys-87 is a binding site for Zn(2+). 2 residues coordinate Mg(2+): Asp-88 and Asp-90. Zn(2+) contacts are provided by Cys-103 and Cys-110.

It belongs to the PRA-CH family. In terms of assembly, homodimer. Requires Mg(2+) as cofactor. The cofactor is Zn(2+).

It is found in the cytoplasm. The catalysed reaction is 1-(5-phospho-beta-D-ribosyl)-5'-AMP + H2O = 1-(5-phospho-beta-D-ribosyl)-5-[(5-phospho-beta-D-ribosylamino)methylideneamino]imidazole-4-carboxamide. The protein operates within amino-acid biosynthesis; L-histidine biosynthesis; L-histidine from 5-phospho-alpha-D-ribose 1-diphosphate: step 3/9. Catalyzes the hydrolysis of the adenine ring of phosphoribosyl-AMP. In Haloquadratum walsbyi (strain DSM 16790 / HBSQ001), this protein is Phosphoribosyl-AMP cyclohydrolase.